Consider the following 290-residue polypeptide: 4-hydroxybenzoate octaprenyltransferase (290 aa).

8 consecutive transmembrane segments (helical) span residues 21 to 41 (IGTM…ADGM), 44 to 64 (LRVL…GCII), 97 to 117 (LFVV…PLVV), 143 to 163 (FLGV…TGEV), 168 to 188 (WWLF…YAMV), 211 to 231 (EIIG…GWSG), 235 to 255 (LLYG…QRLI), and 270 to 290 (NNWA…FAAL).

It belongs to the UbiA prenyltransferase family. The cofactor is Mg(2+).

Its subcellular location is the cell inner membrane. The enzyme catalyses all-trans-octaprenyl diphosphate + 4-hydroxybenzoate = 4-hydroxy-3-(all-trans-octaprenyl)benzoate + diphosphate. The protein operates within cofactor biosynthesis; ubiquinone biosynthesis. Catalyzes the prenylation of para-hydroxybenzoate (PHB) with an all-trans polyprenyl group. Mediates the second step in the final reaction sequence of ubiquinone-8 (UQ-8) biosynthesis, which is the condensation of the polyisoprenoid side chain with PHB, generating the first membrane-bound Q intermediate 3-octaprenyl-4-hydroxybenzoate. The polypeptide is 4-hydroxybenzoate octaprenyltransferase (Shewanella amazonensis (strain ATCC BAA-1098 / SB2B)).